The primary structure comprises 293 residues: Homoserine kinase (293 aa).

84-94 (PISRGLGSSSA) serves as a coordination point for ATP.

Belongs to the GHMP kinase family. Homoserine kinase subfamily.

Its subcellular location is the cytoplasm. The catalysed reaction is L-homoserine + ATP = O-phospho-L-homoserine + ADP + H(+). The protein operates within amino-acid biosynthesis; L-threonine biosynthesis; L-threonine from L-aspartate: step 4/5. Its function is as follows. Catalyzes the ATP-dependent phosphorylation of L-homoserine to L-homoserine phosphate. This Wolinella succinogenes (strain ATCC 29543 / DSM 1740 / CCUG 13145 / JCM 31913 / LMG 7466 / NCTC 11488 / FDC 602W) (Vibrio succinogenes) protein is Homoserine kinase.